We begin with the raw amino-acid sequence, 547 residues long: Methionine--tRNA ligase (547 aa).

The 'HIGH' region signature appears at 13 to 23 (PYANGPLHIGH). Residues C145, C148, C158, and C161 each contribute to the Zn(2+) site. The 'KMSKS' region motif lies at 334 to 338 (QFSKS). An ATP-binding site is contributed by K337.

This sequence belongs to the class-I aminoacyl-tRNA synthetase family. MetG type 1 subfamily. Requires Zn(2+) as cofactor.

It is found in the cytoplasm. It carries out the reaction tRNA(Met) + L-methionine + ATP = L-methionyl-tRNA(Met) + AMP + diphosphate. In terms of biological role, is required not only for elongation of protein synthesis but also for the initiation of all mRNA translation through initiator tRNA(fMet) aminoacylation. The protein is Methionine--tRNA ligase of Thermoplasma acidophilum (strain ATCC 25905 / DSM 1728 / JCM 9062 / NBRC 15155 / AMRC-C165).